The following is a 414-amino-acid chain: Translation initiation factor 2 subunit gamma (414 aa).

The region spanning 7–204 (QPEVNIGLVG…ALQTEIATPD (198 aa)) is the tr-type G domain. The interval 16–23 (GHVDHGKT) is G1. Asp-19, Thr-23, Gly-44, and Ser-46 together coordinate Mg(2+). Residue 19-24 (DHGKTT) coordinates GTP. Positions 44–48 (GISIR) are G2. Residues 91 to 94 (DAPG) are G3. GTP is bound by residues 147–150 (NKVD) and 182–184 (SAE). Positions 147–150 (NKVD) are G4. The G5 stretch occupies residues 182–184 (SAE).

This sequence belongs to the TRAFAC class translation factor GTPase superfamily. Classic translation factor GTPase family. EIF2G subfamily. As to quaternary structure, heterotrimer composed of an alpha, a beta and a gamma chain. The cofactor is Mg(2+).

The enzyme catalyses GTP + H2O = GDP + phosphate + H(+). Functionally, eIF-2 functions in the early steps of protein synthesis by forming a ternary complex with GTP and initiator tRNA. This is Translation initiation factor 2 subunit gamma from Halobacterium salinarum (strain ATCC 29341 / DSM 671 / R1).